We begin with the raw amino-acid sequence, 123 residues long: Large ribosomal subunit protein uL18 (123 aa).

Belongs to the universal ribosomal protein uL18 family. In terms of assembly, part of the 50S ribosomal subunit; part of the 5S rRNA/L5/L18/L25 subcomplex. Contacts the 5S and 23S rRNAs.

Its function is as follows. This is one of the proteins that bind and probably mediate the attachment of the 5S RNA into the large ribosomal subunit, where it forms part of the central protuberance. The chain is Large ribosomal subunit protein uL18 from Symbiobacterium thermophilum (strain DSM 24528 / JCM 14929 / IAM 14863 / T).